The sequence spans 83 residues: Small ribosomal subunit protein bS20 (83 aa).

The protein belongs to the bacterial ribosomal protein bS20 family.

In terms of biological role, binds directly to 16S ribosomal RNA. This Staphylococcus aureus (strain JH1) protein is Small ribosomal subunit protein bS20.